We begin with the raw amino-acid sequence, 298 residues long: Ribosomal RNA small subunit methyltransferase A (298 aa).

S-adenosyl-L-methionine contacts are provided by Asn35, Leu37, Gly62, Glu83, Asp108, and Asn133.

It belongs to the class I-like SAM-binding methyltransferase superfamily. rRNA adenine N(6)-methyltransferase family. RsmA subfamily.

The protein resides in the cytoplasm. It catalyses the reaction adenosine(1518)/adenosine(1519) in 16S rRNA + 4 S-adenosyl-L-methionine = N(6)-dimethyladenosine(1518)/N(6)-dimethyladenosine(1519) in 16S rRNA + 4 S-adenosyl-L-homocysteine + 4 H(+). Its function is as follows. Specifically dimethylates two adjacent adenosines (A1518 and A1519) in the loop of a conserved hairpin near the 3'-end of 16S rRNA in the 30S particle. May play a critical role in biogenesis of 30S subunits. The sequence is that of Ribosomal RNA small subunit methyltransferase A from Streptococcus pyogenes serotype M2 (strain MGAS10270).